Consider the following 142-residue polypeptide: Thioredoxin-like protein YLS8 (142 aa).

This sequence belongs to the DIM1 family. As to expression, expressed in roots, leaves, stems, cauline leaves and flowers.

This chain is Thioredoxin-like protein YLS8 (YLS8), found in Arabidopsis thaliana (Mouse-ear cress).